The chain runs to 420 residues: Peroxisomal biogenesis factor 3 (420 aa).

Residues 1 to 16 (MPIFSSLNSFLRRHKK) lie on the Peroxisomal side of the membrane. A helical transmembrane segment spans residues 17–37 (KLIVTATLTFSAYFLVNQFII). At 38–420 (KKLKNFQNSL…FSASIYSNFE (383 aa)) the chain is on the cytoplasmic side.

The protein belongs to the peroxin-3 family.

The protein resides in the peroxisome membrane. In terms of biological role, involved in peroxisome biosynthesis. This Debaryomyces hansenii (strain ATCC 36239 / CBS 767 / BCRC 21394 / JCM 1990 / NBRC 0083 / IGC 2968) (Yeast) protein is Peroxisomal biogenesis factor 3 (PEX3).